The following is a 223-amino-acid chain: Bone marrow proteoglycan (223 aa).

A signal peptide spans 1–16 (MKFPLLLALLVGGASA). The propeptide at 17–106 (LHLSSETSDS…TSLMGDSGCK (90 aa)) is acidic. Residues 20–81 (SSETSDSKSP…PGDEGAVSGQ (62 aa)) are disordered. O-linked (GalNAc...) threonine; partial glycosylation occurs at T23. O-linked (GalNAc...) serine glycosylation is present at S24. Residue S66 is glycosylated (O-linked (Xyl...) (chondroitin sulfate) serine). The 100-residue stretch at 124–223 (SVCRRCYRGT…VKRRPFICSY (100 aa)) folds into the C-type lectin domain. Cystine bridges form between C126-C221 and C198-C213.

Post-translationally, nitrated.

It localises to the secreted. Its function is as follows. Cytotoxin and helminthotoxin. MBP also induces non-cytolytic histamine release from basophils. It is involved in antiparasitic defense mechanisms and immune hypersensitivity reactions. This chain is Bone marrow proteoglycan (Prg2), found in Mus musculus (Mouse).